We begin with the raw amino-acid sequence, 769 residues long: Bifunctional glycosyltransferase pgtA (769 aa).

An N-acetylgalactosamine 3-beta-galactosyltransferase region spans residues 25-210 (YQGINNLIIS…SVIFKRSIFT (186 aa)). Residues 410–441 (NNINNNNNNNNNNNNNNNNNNNNNNNNNNNNN) show a composition bias toward low complexity. A disordered region spans residues 410-442 (NNINNNNNNNNNNNNNNNNNNNNNNNNNNNNNS). The alpha-1,2-fucosyltransferase stretch occupies residues 442–769 (SILNFISGIN…SVHIGELFIS (328 aa)).

It belongs to the glycosyltransferase 2 family.

The enzyme catalyses an N-acetyl-beta-D-glucosaminyl derivative + UDP-alpha-D-galactose = a beta-D-galactosyl-(1-&gt;3)-N-acetyl-beta-D-glucosaminyl derivative + UDP + H(+). It carries out the reaction a beta-D-galactosyl-(1-&gt;3)-N-acetyl-beta-D-glucosaminyl derivative + GDP-beta-L-fucose = an alpha-L-Fuc-(1-&gt;2)-beta-D-Gal-(1-&gt;3)-beta-D-GlcNAc derivative + GDP + H(+). In terms of biological role, bifunctional protein composed of 2 glycosyltransferase domains involved in glycosylating skp1. The N-terminal part catalyzes the transfer of a galactose residue to GlcNAc-skp1 in a beta 1-3 linkage. The C-terminal part catalyzes the transfer of a fucose residue to Gal-GlcNAc-skp1 in an alpha 1-2 linkage. The protein is Bifunctional glycosyltransferase pgtA (pgtA) of Dictyostelium discoideum (Social amoeba).